The following is a 137-amino-acid chain: ATP synthase epsilon chain, chloroplastic (137 aa).

Belongs to the ATPase epsilon chain family. As to quaternary structure, F-type ATPases have 2 components, CF(1) - the catalytic core - and CF(0) - the membrane proton channel. CF(1) has five subunits: alpha(3), beta(3), gamma(1), delta(1), epsilon(1). CF(0) has three main subunits: a, b and c.

The protein localises to the plastid. The protein resides in the chloroplast thylakoid membrane. Its function is as follows. Produces ATP from ADP in the presence of a proton gradient across the membrane. This Sorghum bicolor (Sorghum) protein is ATP synthase epsilon chain, chloroplastic.